We begin with the raw amino-acid sequence, 464 residues long: Bifunctional protein GlmU (464 aa).

Residues 1–231 are pyrophosphorylase; it reads MDVVIMAAGK…ATQVAGVNSP (231 aa). UDP-N-acetyl-alpha-D-glucosamine contacts are provided by residues Lys-20, Gln-78, 83–84, 105–107, Gly-142, Glu-156, and Asn-229; these read GT and SGD. Asp-107 provides a ligand contact to Mg(2+). Residue Asn-229 coordinates Mg(2+). The interval 232–252 is linker; sequence VQLAALERAFQSKVALQLMEQ. An N-acetyltransferase region spans residues 253–464; the sequence is GVRLADPARL…SIANWKRPSK (212 aa). UDP-N-acetyl-alpha-D-glucosamine contacts are provided by Arg-343 and Lys-361. The Proton acceptor role is filled by His-373. Residues Tyr-376 and Asn-387 each contribute to the UDP-N-acetyl-alpha-D-glucosamine site. Acetyl-CoA-binding positions include Ala-390, 396–397, Ser-415, Gly-433, and Arg-450; that span reads NY.

In the N-terminal section; belongs to the N-acetylglucosamine-1-phosphate uridyltransferase family. This sequence in the C-terminal section; belongs to the transferase hexapeptide repeat family. In terms of assembly, homotrimer. Requires Mg(2+) as cofactor.

It is found in the cytoplasm. The enzyme catalyses alpha-D-glucosamine 1-phosphate + acetyl-CoA = N-acetyl-alpha-D-glucosamine 1-phosphate + CoA + H(+). The catalysed reaction is N-acetyl-alpha-D-glucosamine 1-phosphate + UTP + H(+) = UDP-N-acetyl-alpha-D-glucosamine + diphosphate. The protein operates within nucleotide-sugar biosynthesis; UDP-N-acetyl-alpha-D-glucosamine biosynthesis; N-acetyl-alpha-D-glucosamine 1-phosphate from alpha-D-glucosamine 6-phosphate (route II): step 2/2. It participates in nucleotide-sugar biosynthesis; UDP-N-acetyl-alpha-D-glucosamine biosynthesis; UDP-N-acetyl-alpha-D-glucosamine from N-acetyl-alpha-D-glucosamine 1-phosphate: step 1/1. It functions in the pathway bacterial outer membrane biogenesis; LPS lipid A biosynthesis. Its function is as follows. Catalyzes the last two sequential reactions in the de novo biosynthetic pathway for UDP-N-acetylglucosamine (UDP-GlcNAc). The C-terminal domain catalyzes the transfer of acetyl group from acetyl coenzyme A to glucosamine-1-phosphate (GlcN-1-P) to produce N-acetylglucosamine-1-phosphate (GlcNAc-1-P), which is converted into UDP-GlcNAc by the transfer of uridine 5-monophosphate (from uridine 5-triphosphate), a reaction catalyzed by the N-terminal domain. This is Bifunctional protein GlmU from Albidiferax ferrireducens (strain ATCC BAA-621 / DSM 15236 / T118) (Rhodoferax ferrireducens).